The following is a 526-amino-acid chain: 4-alpha-glucanotransferase (526 aa).

The protein belongs to the disproportionating enzyme family.

The protein localises to the cytoplasm. It catalyses the reaction Transfers a segment of a (1-&gt;4)-alpha-D-glucan to a new position in an acceptor, which may be glucose or a (1-&gt;4)-alpha-D-glucan.. This Chlamydia pneumoniae (Chlamydophila pneumoniae) protein is 4-alpha-glucanotransferase (malQ).